The sequence spans 697 residues: Histone-lysine N-methyltransferase SETDB2 (697 aa).

Positions 172-242 (LKKENPLNLP…DNFSFSTQVQ (71 aa)) constitute an MBD domain. Positions 304–378 (KCCSCTDGCL…LCQNRVVQHG (75 aa)) constitute a Pre-SET domain. Zn(2+) contacts are provided by C306, C308, C312, C318, C320, C359, C363, C365, and C370. Residues 381-672 (LRLQVFKTDT…AGTELTWDYN (292 aa)) form the SET domain. 391-393 (KGW) serves as a coordination point for S-adenosyl-L-methionine. 2 disordered regions span residues 438 to 461 (KEDNGSTSTLMLSKRKRKPSHSDS) and 529 to 605 (VHNS…STSP). The segment covering 565–581 (SGYVSEESSSSVISGGH) has biased composition (low complexity). S-adenosyl-L-methionine-binding positions include R626 and 629–630 (NH). The Zn(2+) site is built by C632, C685, C687, and C692.

It belongs to the class V-like SAM-binding methyltransferase superfamily.

Its subcellular location is the nucleus. It is found in the chromosome. It catalyses the reaction N(6),N(6)-dimethyl-L-lysyl(9)-[histone H3] + S-adenosyl-L-methionine = N(6),N(6),N(6)-trimethyl-L-lysyl(9)-[histone H3] + S-adenosyl-L-homocysteine + H(+). Its function is as follows. Histone methyltransferase involved in left-right axis specification in early development and mitosis. Specifically trimethylates 'Lys-9' of histone H3 (H3K9me3). H3K9me3 represents a specific tag for epigenetic transcriptional repression by recruiting HP1 (CBX1, CBX3 and/or CBX5) proteins to methylated histones. Contributes to H3K9me3 in both the interspersed repetitive elements and centromere-associated repeats. Plays a role in chromosome condensation and segregation during mitosis. The protein is Histone-lysine N-methyltransferase SETDB2 (setdb2) of Xenopus tropicalis (Western clawed frog).